The sequence spans 184 residues: Large ribosomal subunit protein uL6 (184 aa).

Belongs to the universal ribosomal protein uL6 family. In terms of assembly, part of the 50S ribosomal subunit.

Functionally, this protein binds to the 23S rRNA, and is important in its secondary structure. It is located near the subunit interface in the base of the L7/L12 stalk, and near the tRNA binding site of the peptidyltransferase center. This Thermomicrobium roseum (strain ATCC 27502 / DSM 5159 / P-2) protein is Large ribosomal subunit protein uL6.